Here is a 795-residue protein sequence, read N- to C-terminus: Serine/threonine-protein kinase MARK1 (795 aa).

The segment at 1–41 (MSARTPLPTVNERDTENHTSVDGYTETHIPPAKSSSRQNLP) is disordered. Threonine 5 carries the post-translational modification Phosphothreonine. The Protein kinase domain occupies 60–311 (YRLQKTIGKG…LEQIMKDRWM (252 aa)). ATP is bound by residues 66 to 74 (IGKGNFAKV) and lysine 89. The active-site Proton acceptor is the aspartate 182. A Phosphothreonine modification is found at threonine 208. The residue at position 215 (threonine 215) is a Phosphothreonine; by LKB1 and TAOK1. Phosphoserine; by GSK3-beta is present on serine 219. The region spanning 329-370 (DLSDAKRIDIMVTMGFARDEINDALVSQKYDEVMATYILLGR) is the UBA domain. Disordered regions lie at residues 377–498 (GGES…SGGS) and 518–699 (QNGR…KPRS). Serine 382, serine 390, serine 393, serine 403, serine 423, and serine 444 each carry phosphoserine. Positions 387-403 (CQRSRPSSDLNNSTLQS) are enriched in polar residues. Positions 447–459 (SEQKEEWGKDTAR) are enriched in basic and acidic residues. Positions 462-473 (GSTTVGSKSEVT) are enriched in polar residues. The residue at position 475 (serine 475) is a Phosphoserine. The segment covering 486 to 495 (TASPSNNVYS) has biased composition (polar residues). Low complexity-rich tracts occupy residues 523 to 547 (SSLTEMSASSMSSAGSTVASAGPSA) and 585 to 599 (PAASPSAHSISASTP). Position 588 is a phosphoserine (serine 588). Phosphothreonine; by PKC/PRKCZ is present on threonine 613. Residues 647–657 (GTSTGIISKIT) are compositionally biased toward polar residues. 2 stretches are compositionally biased toward basic and acidic residues: residues 661 to 676 (VRRDPSEGEASGRADT) and 683 to 697 (DPKERDKDEGKEAKP). Position 666 is a phosphoserine (serine 666). The KA1 domain occupies 746–795 (DARQDSLVQWEMEVCKLPRLSLNGVRFKRISGTSIAFKNIASKIANELKL).

This sequence belongs to the protein kinase superfamily. CAMK Ser/Thr protein kinase family. SNF1 subfamily. Interacts with MAPT/TAU. It depends on Mg(2+) as a cofactor. In terms of processing, phosphorylated at Thr-215 by STK11/LKB1 in complex with STE20-related adapter-alpha (STRADA) pseudo kinase and CAB39. Phosphorylation at Thr-215 by TAOK1 activates the kinase activity, leading to phosphorylation and detachment of MAPT/TAU from microtubules. Phosphorylation at Ser-219 by GSK3-beta (GSK3B) inhibits the kinase activity. Phosphorylation at Thr-613 by PRKCZ/aPKC in polarized epithelial cells inhibits the kinase activity.

Its subcellular location is the cell membrane. The protein resides in the cytoplasm. The protein localises to the cytoskeleton. It localises to the cell projection. It is found in the dendrite. It carries out the reaction L-seryl-[protein] + ATP = O-phospho-L-seryl-[protein] + ADP + H(+). The enzyme catalyses L-threonyl-[protein] + ATP = O-phospho-L-threonyl-[protein] + ADP + H(+). The catalysed reaction is L-seryl-[tau protein] + ATP = O-phospho-L-seryl-[tau protein] + ADP + H(+). It catalyses the reaction L-threonyl-[tau protein] + ATP = O-phospho-L-threonyl-[tau protein] + ADP + H(+). Its activity is regulated as follows. Inhibited by phosphorylation at Ser-219. Activated by phosphorylation on Thr-215. Functionally, serine/threonine-protein kinase. Involved in cell polarity and microtubule dynamics regulation. Phosphorylates DCX, MAP2 and MAP4. Phosphorylates the microtubule-associated protein MAPT/TAU. Involved in cell polarity by phosphorylating the microtubule-associated proteins MAP2, MAP4 and MAPT/TAU at KXGS motifs, causing detachment from microtubules, and their disassembly. Involved in the regulation of neuronal migration through its dual activities in regulating cellular polarity and microtubule dynamics, possibly by phosphorylating and regulating DCX. Also acts as a positive regulator of the Wnt signaling pathway, probably by mediating phosphorylation of dishevelled proteins (DVL1, DVL2 and/or DVL3). This is Serine/threonine-protein kinase MARK1 from Mus musculus (Mouse).